A 305-amino-acid chain; its full sequence is Cytochrome c biogenesis protein CcsA (305 aa).

A run of 8 helical transmembrane segments spans residues 13 to 33 (IYFS…VYPV), 42 to 62 (KGII…WFYS), 70 to 90 (LYES…FIDI), 97 to 117 (WIGV…TLIL), 135 to 155 (WLIM…CGSL), 212 to 232 (YTIV…AVWA), 242 to 262 (WDPK…YIHI), and 276 to 296 (VASL…ILGI).

It belongs to the CcmF/CycK/Ccl1/NrfE/CcsA family. As to quaternary structure, may interact with Ccs1.

The protein resides in the plastid. The protein localises to the chloroplast thylakoid membrane. In terms of biological role, required during biogenesis of c-type cytochromes (cytochrome c6 and cytochrome f) at the step of heme attachment. This chain is Cytochrome c biogenesis protein CcsA, found in Welwitschia mirabilis (Tree tumbo).